A 261-amino-acid polypeptide reads, in one-letter code: Indole-3-glycerol phosphate synthase (261 aa).

This sequence belongs to the TrpC family.

It carries out the reaction 1-(2-carboxyphenylamino)-1-deoxy-D-ribulose 5-phosphate + H(+) = (1S,2R)-1-C-(indol-3-yl)glycerol 3-phosphate + CO2 + H2O. Its pathway is amino-acid biosynthesis; L-tryptophan biosynthesis; L-tryptophan from chorismate: step 4/5. The protein is Indole-3-glycerol phosphate synthase of Burkholderia multivorans (strain ATCC 17616 / 249).